We begin with the raw amino-acid sequence, 550 residues long: MFKKNQKLSKDKGLEVNSVQAGAPEESDVKLNNGGKANERGSNEFLDTAQSKEKVIASVVGNMLHMSTEESEPPQQVSSTSMFSENTIYPKHEGSPKSSTKNTQLKQEDISKTSSYSKQTNSSNIPKSLAITTYPKQGSTLKPAANGTHDREAEKPKSSEDLIQSKKGDIFKPSEDSIQSKKGDMPKSSEDPIQSKKDDTAKSLEDTIQSKNGDMPKSSEDPIQSKKDDTARSLEDSIQSKKGDMPKSSDTIQSKESETPKFLQDTIQSKGGKINKQVKDSMKSKESKIRKPLKDSIQSKENKIPKSSQDSAQPKEGKIHKPLKDSLPSKEGDISKPSEDTIQAKEEITVSPEDTIQAKEEITMSPEDTIQAKEEITVSPEDTIQAKEEITVSPEDTMQSKEEITVSPEDTVQSQEGDIKSSEDVQPSENEIFPFEAEIETLEEGMVRVIKDKEEFEEVLKDAGEKLVAVDFSAPWCGPCRKMRPHFHSLSLKHEDVIFLEVDTEDCEQLVQDCEVFHLPTFQFYKNEEKVGEFSGALVEKLEKSIAELK.

Residues 1-50 (MFKKNQKLSKDKGLEVNSVQAGAPEESDVKLNNGGKANERGSNEFLDTAQ) are disordered. Phosphoserine is present on residues Ser-42 and Ser-51. The interval 63-428 (MLHMSTEESE…IKSSEDVQPS (366 aa)) is disordered. Composition is skewed to polar residues over residues 73–87 (PPQQ…SENT), 96–105 (PKSSTKNTQL), and 112–140 (KTSS…QGST). A run of 22 repeats spans residues 104–118 (QLKQ…SYSK), 119–133 (QTNS…AITT), 134–148 (YPKQ…ANGT), 149–163 (HDRE…EDLI), 164–178 (QSKK…EDSI), 179–193 (QSKK…EDPI), 194–208 (QSKK…EDTI), 209–223 (QSKN…EDPI), 224–238 (QSKK…EDSI), 239–252 (QSKK…SDTI), 253–267 (QSKE…QDTI), 268–282 (QSKG…KDSM), 283–297 (KSKE…KDSI), 298–312 (QSKE…QDSA), 313–327 (QPKE…KDSL), 328–342 (PSKE…EDTI), 343–357 (QAKE…DTIQ), 358–384 (AKEE…EDTI), 385–399 (QAKE…DTMQ), 400–412 (SKEE…EDTV), 413–425 (QSQE…SEDV), and 426–440 (QPSE…AEIE). The interval 104 to 440 (QLKQEDISKT…EIFPFEAEIE (337 aa)) is 22 X 15 AA approximate tandem repeat of Q-P-K-X-G-D-I-P-K-S-[PS]-E-[KE]-X-I. 4 stretches are compositionally biased toward basic and acidic residues: residues 148–205 (THDR…KSLE), 217–259 (KSSE…ESET), 277–304 (QVKD…ENKI), and 313–348 (QPKE…KEEI). The residue at position 158 (Ser-158) is a Phosphoserine. Phosphoserine occurs at positions 351 and 379. In terms of domain architecture, Thioredoxin spans 401 to 550 (KEEITVSPED…KLEKSIAELK (150 aa)). Phosphoserine is present on Ser-407. Cysteines 477 and 480 form a disulfide.

Testis-specific. Strongly expressed in the testicular seminiferous tubules, mostly in the round spermatids.

It localises to the cytoplasm. Probably plays a regulatory role in sperm development. May participate in regulation of fibrous sheath (FS) assembly by supporting the formation of disulfide bonds during sperm tail morphogenesis. May also be required to rectify incorrect disulfide pairing and generate suitable pairs between the FS constituents. Can reduce disulfide bonds in vitro in the presence of NADP and thioredoxin reductase. The chain is Thioredoxin domain-containing protein 2 (Txndc2) from Rattus norvegicus (Rat).